The chain runs to 253 residues: uncharacterized protein (253 aa).

Belongs to the NAD(P)-dependent epimerase/dehydratase family.

This is an uncharacterized protein from Bacillus subtilis (strain 168).